The chain runs to 165 residues: Putative 4-hydroxy-4-methyl-2-oxoglutarate aldolase (165 aa).

Substrate-binding positions include 80–83 and Arg-102; that span reads GGNL. Asp-103 serves as a coordination point for a divalent metal cation.

The protein belongs to the class II aldolase/RraA-like family. As to quaternary structure, homotrimer. A divalent metal cation serves as cofactor.

It catalyses the reaction 4-hydroxy-4-methyl-2-oxoglutarate = 2 pyruvate. The catalysed reaction is oxaloacetate + H(+) = pyruvate + CO2. Functionally, catalyzes the aldol cleavage of 4-hydroxy-4-methyl-2-oxoglutarate (HMG) into 2 molecules of pyruvate. Also contains a secondary oxaloacetate (OAA) decarboxylase activity due to the common pyruvate enolate transition state formed following C-C bond cleavage in the retro-aldol and decarboxylation reactions. This is Putative 4-hydroxy-4-methyl-2-oxoglutarate aldolase from Cupriavidus taiwanensis (strain DSM 17343 / BCRC 17206 / CCUG 44338 / CIP 107171 / LMG 19424 / R1) (Ralstonia taiwanensis (strain LMG 19424)).